The sequence spans 98 residues: Large ribosomal subunit protein bL21 (98 aa).

The protein belongs to the bacterial ribosomal protein bL21 family. In terms of assembly, part of the 50S ribosomal subunit. Contacts protein L20.

In terms of biological role, this protein binds to 23S rRNA in the presence of protein L20. This chain is Large ribosomal subunit protein bL21, found in Novosphingobium aromaticivorans (strain ATCC 700278 / DSM 12444 / CCUG 56034 / CIP 105152 / NBRC 16084 / F199).